A 417-amino-acid polypeptide reads, in one-letter code: Serine hydroxymethyltransferase (417 aa).

Residues leucine 122 and 126-128 contribute to the (6S)-5,6,7,8-tetrahydrofolate site; that span reads GHL. N6-(pyridoxal phosphate)lysine is present on lysine 230. A (6S)-5,6,7,8-tetrahydrofolate-binding site is contributed by 355-357; it reads SPF.

Belongs to the SHMT family. In terms of assembly, homodimer. It depends on pyridoxal 5'-phosphate as a cofactor.

Its subcellular location is the cytoplasm. It catalyses the reaction (6R)-5,10-methylene-5,6,7,8-tetrahydrofolate + glycine + H2O = (6S)-5,6,7,8-tetrahydrofolate + L-serine. It functions in the pathway one-carbon metabolism; tetrahydrofolate interconversion. It participates in amino-acid biosynthesis; glycine biosynthesis; glycine from L-serine: step 1/1. Functionally, catalyzes the reversible interconversion of serine and glycine with tetrahydrofolate (THF) serving as the one-carbon carrier. This reaction serves as the major source of one-carbon groups required for the biosynthesis of purines, thymidylate, methionine, and other important biomolecules. Also exhibits THF-independent aldolase activity toward beta-hydroxyamino acids, producing glycine and aldehydes, via a retro-aldol mechanism. The polypeptide is Serine hydroxymethyltransferase (Francisella tularensis subsp. holarctica (strain LVS)).